The sequence spans 410 residues: Mating-type locus allele B7 protein (410 aa).

A variable domain between B alleles region spans residues 1 to 110 (MSSDPNFSLT…VNVGSPAVGC (110 aa)). The segment at residues 107 to 184 (AVGCRNLSED…NARRRSGWSH (78 aa)) is a DNA-binding region (homeobox; TALE-type). The tract at residues 111-410 (RNLSEDLPAY…PFLCLSVAFV (300 aa)) is highly conserved between B alleles. 3 disordered regions span residues 202–225 (RAKL…SNNL), 278–336 (TPKP…PELS), and 374–394 (ARGN…QPDE). The Nuclear localization signal motif lies at 276-308 (KKTPKPGMPRPVTTVAKRQPARKTKPAAKPNSR). Over residues 306–336 (NSRTANPRASTTPSIDSTLDSSKLESTPELS) the composition is skewed to polar residues. The tract at residues 333 to 410 (PELSMCSTAD…PFLCLSVAFV (78 aa)) is not essential for B7 function. Residues 375-388 (RGNRKVKALPKRAG) show a composition bias toward basic residues.

Belongs to the TALE/M-ATYP homeobox family.

It localises to the nucleus. In terms of biological role, the B locus has at least 25 alleles, and any combination of two different B alleles yields a multimeric regulatory protein, that activates genes responsible for the pathogenicity and for the sexual development of the fungus within the corn plant. The chain is Mating-type locus allele B7 protein from Mycosarcoma maydis (Corn smut fungus).